Consider the following 410-residue polypeptide: MKLSKLLQLAVFSSLVTSKNIFDLESLKQGLQDEETVNNDKREPVNLLYLDRFKMGVSDEAKGNAKFKRDPKNVIDPASLKEGSAEEEQKDKREPKNLFNLQALHEGLKDEETKSKREAKNLPNLEALEEALKGGSLPKKDAKNLIDLVALKQSLEKEAAKRDAKNIPDLEALKTGIEEEEGQVAKRDAKNVINLSNFIETPSKREGKNLFDLTKFQQSGQPIKKRDQKILKQEKSLFVLNSVDCFNNLLQSILPQLSSISIFSSYIRQFASIDARTANPQKVMLIVAPDNDSLETKLSDLKPWEFPEQITPEQSEQEQDKTLKNNLLHFLNGHLINNFEENLVIDKSSTDAVTIISKLNNGKFLKIKQDQLSQKFSIRLLDSENWIDVETIKQVENGFVLIINDSLVKP.

A signal peptide spans 1–18 (MKLSKLLQLAVFSSLVTS). Composition is skewed to basic and acidic residues over residues 64-73 (NAKFKRDPKN) and 83-96 (GSAE…REPK). The disordered stretch occupies residues 64-98 (NAKFKRDPKNVIDPASLKEGSAEEEQKDKREPKNL). In terms of domain architecture, FAS1 spans 247 to 407 (NNLLQSILPQ…GFVLIINDSL (161 aa)).

The protein resides in the vacuole. The polypeptide is FAS1 domain-containing protein CaO19.3004 (Candida albicans (strain SC5314 / ATCC MYA-2876) (Yeast)).